The primary structure comprises 250 residues: uncharacterized protein (250 aa).

To class-3 of adenylyl cyclases.

This is an uncharacterized protein from Mycobacterium tuberculosis (strain ATCC 25618 / H37Rv).